Reading from the N-terminus, the 177-residue chain is Putative rubredoxin (177 aa).

Residues 1-38 (MKICRICGYQIPEGEFNLLEDGWVCPRCGVGKEELQDS) form the Rubredoxin-like domain. Fe cation-binding residues include cysteine 4, cysteine 7, cysteine 25, and cysteine 28.

Belongs to the rubredoxin family. Fe(3+) is required as a cofactor.

The chain is Putative rubredoxin (rdxA) from Methanothermobacter thermautotrophicus (strain ATCC 29096 / DSM 1053 / JCM 10044 / NBRC 100330 / Delta H) (Methanobacterium thermoautotrophicum).